The sequence spans 262 residues: Aminoglycoside 3'-phosphotransferase (262 aa).

Catalysis depends on Asp187, which acts as the Proton acceptor.

This sequence belongs to the aminoglycoside phosphotransferase family. In terms of assembly, monomer.

Its subcellular location is the cytoplasm. It catalyses the reaction kanamycin A + ATP = kanamycin 3'-phosphate + ADP + H(+). Functionally, resistance to butirosin and structurally-related aminoglycosides, including kanamycin and amikacin. The polypeptide is Aminoglycoside 3'-phosphotransferase (Niallia circulans (Bacillus circulans)).